Reading from the N-terminus, the 153-residue chain is DNA gyrase inhibitor (153 aa).

Belongs to the DNA gyrase inhibitor family. As to quaternary structure, interacts with DNA gyrase.

Its subcellular location is the cytoplasm. Functionally, inhibits the supercoiling activity of DNA gyrase. Acts by inhibiting DNA gyrase at an early step, prior to (or at the step of) binding of DNA by the gyrase. It protects cells against toxins that target DNA gyrase, by inhibiting activity of these toxins and reducing the formation of lethal double-strand breaks in the cell. In Pantoea sp. (strain At-9b), this protein is DNA gyrase inhibitor.